The primary structure comprises 357 residues: Arginine kinase (357 aa).

One can recognise a Phosphagen kinase N-terminal domain in the interval 9-91 (KLEAGFKKLQ…FDPIIDDYHG (83 aa)). Residue 64–68 (GVGIY) participates in substrate binding. The Phosphagen kinase C-terminal domain occupies 119–356 (FIISTRVRCG…LEMIKMEKAA (238 aa)). ATP-binding positions include 122 to 126 (STRVR) and His185. Residue Glu225 participates in substrate binding. Residue Arg229 participates in ATP binding. Substrate is bound at residue Cys271. Residues 280 to 284 (RASVH) and 309 to 314 (RGTRGE) each bind ATP. A substrate-binding site is contributed by Glu314.

Belongs to the ATP:guanido phosphotransferase family. In terms of assembly, monomer.

Its subcellular location is the cytoplasm. The catalysed reaction is L-arginine + ATP = N(omega)-phospho-L-arginine + ADP + H(+). Catalyzes the reversible transfer of the terminal phosphoryl group of ATP to L-arginine. In Limulus polyphemus (Atlantic horseshoe crab), this protein is Arginine kinase.